The following is a 908-amino-acid chain: Flap endonuclease GEN homolog 1 (908 aa).

Positions 2–96 are XPG-N domain; that stretch reads GVNDLWQILE…SKRNQSRYGS (95 aa). 7 residues coordinate Mg(2+): Asp-30, Glu-75, Glu-134, Glu-136, Asp-155, Asp-157, and Asp-208. The interval 122–208 is XPG-I domain; sequence ECLGIPWVQA…VGLAILLGCD (87 aa). The interval 208-384 is 5'-3' exonuclease domain; sequence DYLPKGVPGV…LLVLLTHYDM (177 aa). Positions 390–464 are chromodomain; that stretch reads GSRNSNQLQP…VYQKQKLEIK (75 aa). Phosphoserine occurs at positions 801 and 802.

The protein belongs to the XPG/RAD2 endonuclease family. GEN subfamily. Largely monomeric, dimerizes on the Holliday junction and the first nick occurs upon dimerization at the junction. Mg(2+) serves as cofactor.

The protein localises to the nucleus. In terms of biological role, endonuclease which resolves Holliday junctions (HJs) by the introduction of symmetrically related cuts across the junction point, to produce nicked duplex products in which the nicks can be readily ligated. Four-way DNA intermediates, also known as Holliday junctions, are formed during homologous recombination and DNA repair, and their resolution is necessary for proper chromosome segregation. Cleaves HJs by a nick and counter-nick mechanism involving dual coordinated incisions that lead to the formation of ligatable nicked duplex products. Cleavage of the first strand is rate limiting, while second strand cleavage is rapid. Largely monomeric, dimerizes on the HJ and the first nick occurs upon dimerization at the junction. Efficiently cleaves both single and double HJs contained within large recombination intermediates. Exhibits a weak sequence preference for incision between two G residues that reside in a T-rich region of DNA. Also has endonuclease activity on 5'-flap and replication fork (RF) DNA substrates. In Homo sapiens (Human), this protein is Flap endonuclease GEN homolog 1 (GEN1).